Consider the following 245-residue polypeptide: MRVDGREKIELRHIHIHTNYLKHPEGSVLIEVGDTKVICSATIEERVPPFMRGEGKGWVTAEYAMIPRATEQRTIRESSKGKVTGRTMEIQRLIGRALRAVVDLEALGERTVWIDCDVIQADGGTRTASITGAYVAMVLAFEKLLQAEKVSKIPVKDYLAATSVGIVEEQGVVLDLNYAEDSKADVDMNVIMTGKGQFVEVQGTGEEATFSRAQLNELLDAAEQGIFQLIDMQKEALGDIVSHIE.

Phosphate-binding positions include Arg-86 and 124–126 (GTR).

This sequence belongs to the RNase PH family. Homohexameric ring arranged as a trimer of dimers.

It catalyses the reaction tRNA(n+1) + phosphate = tRNA(n) + a ribonucleoside 5'-diphosphate. Functionally, phosphorolytic 3'-5' exoribonuclease that plays an important role in tRNA 3'-end maturation. Removes nucleotide residues following the 3'-CCA terminus of tRNAs; can also add nucleotides to the ends of RNA molecules by using nucleoside diphosphates as substrates, but this may not be physiologically important. Probably plays a role in initiation of 16S rRNA degradation (leading to ribosome degradation) during starvation. This is Ribonuclease PH from Bacillus cereus (strain B4264).